Here is a 564-residue protein sequence, read N- to C-terminus: Proline--tRNA ligase (564 aa).

This sequence belongs to the class-II aminoacyl-tRNA synthetase family. ProS type 1 subfamily. Homodimer.

It is found in the cytoplasm. It catalyses the reaction tRNA(Pro) + L-proline + ATP = L-prolyl-tRNA(Pro) + AMP + diphosphate. Its function is as follows. Catalyzes the attachment of proline to tRNA(Pro) in a two-step reaction: proline is first activated by ATP to form Pro-AMP and then transferred to the acceptor end of tRNA(Pro). As ProRS can inadvertently accommodate and process non-cognate amino acids such as alanine and cysteine, to avoid such errors it has two additional distinct editing activities against alanine. One activity is designated as 'pretransfer' editing and involves the tRNA(Pro)-independent hydrolysis of activated Ala-AMP. The other activity is designated 'posttransfer' editing and involves deacylation of mischarged Ala-tRNA(Pro). The misacylated Cys-tRNA(Pro) is not edited by ProRS. The sequence is that of Proline--tRNA ligase from Bacillus velezensis (strain DSM 23117 / BGSC 10A6 / LMG 26770 / FZB42) (Bacillus amyloliquefaciens subsp. plantarum).